We begin with the raw amino-acid sequence, 1253 residues long: Elongator complex protein 1 (1253 aa).

Residues 830–1253 are mediates dimerization; that stretch reads VDVNMLFDHA…KPFEKLSILI (424 aa). Polar residues predominate over residues 1126–1141; that stretch reads YTKSSNSSKMTRNTSK. A disordered region spans residues 1126–1153; the sequence is YTKSSNSSKMTRNTSKNNRRLERKRARG. Residues 1137–1155 form a required for binding to tRNA region; the sequence is RNTSKNNRRLERKRARGKK. Positions 1142–1153 are enriched in basic residues; that stretch reads NNRRLERKRARG.

It belongs to the ELP1/IKA1 family. In terms of assembly, homodimer. Component of the elongator complex.

The protein resides in the cytoplasm. It functions in the pathway tRNA modification; 5-methoxycarbonylmethyl-2-thiouridine-tRNA biosynthesis. Component of the elongator complex, a multiprotein complex which is required for multiple tRNA modifications, including mcm5U (5-methoxycarbonylmethyl uridine), mcm5s2U (5-methoxycarbonylmethyl-2-thiouridine), and ncm5U (5-carbamoylmethyl uridine). The elongator complex catalyzes formation of carboxymethyluridine in the wobble base at position 34 in tRNAs. ELP1 binds to tRNA, mediating interaction of the elongator complex with tRNA. This chain is Elongator complex protein 1, found in Schizosaccharomyces pombe (strain 972 / ATCC 24843) (Fission yeast).